A 140-amino-acid polypeptide reads, in one-letter code: Probable deoxyuridine 5'-triphosphate nucleotidohydrolase (140 aa).

Substrate contacts are provided by residues 62–64 (RSG), 76–79 (GVID), arginine 130, and 135–136 (FG).

Belongs to the dUTPase family. Homotrimer. Requires Mg(2+) as cofactor.

It carries out the reaction dUTP + H2O = dUMP + diphosphate + H(+). It functions in the pathway pyrimidine metabolism; dUMP biosynthesis; dUMP from dCTP (dUTP route): step 2/2. This enzyme is involved in nucleotide metabolism: it produces dUMP, the immediate precursor of thymidine nucleotides and it decreases the intracellular concentration of dUTP so that uracil cannot be incorporated into DNA. The polypeptide is Probable deoxyuridine 5'-triphosphate nucleotidohydrolase (Schizosaccharomyces pombe (strain 972 / ATCC 24843) (Fission yeast)).